The primary structure comprises 176 residues: Heme oxygenase HutZ (176 aa).

A heme-binding site is contributed by His170.

This sequence belongs to the heme oxygenase HugZ/HutZ family. In terms of assembly, homodimer. Interacts with HutX, leading to the transfer of the heme from HutX to apo-HutZ.

The enzyme catalyses heme b + 3 AH2 + 3 O2 + 2 H(+) = biliverdin IXbeta + CO + Fe(2+) + 3 A + 3 H2O. It carries out the reaction heme b + 3 AH2 + 3 O2 + 3 H(+) = biliverdin IXdelta + CO + Fe(2+) + 3 A + 3 H2O. With respect to regulation, activity is pH-dependent. A proximal hydrogen bond between Asp-132 and the heme axial ligant His-170 is essential for heme degradation activity. Heme-degradation reaction is inhibited by iron chelators. In terms of biological role, involved in heme degradation. Catalyzes the degradation of heme to biliverdin, with the release of iron. Forms biliverdin beta and delta. Binds heme with high efficiency. The chain is Heme oxygenase HutZ from Vibrio cholerae serotype O1 (strain ATCC 39315 / El Tor Inaba N16961).